Reading from the N-terminus, the 380-residue chain is Cytochrome b (380 aa).

Helical transmembrane passes span 33-53 (FGSL…FLAM), 77-98 (WLIR…YLHI), 113-133 (WNIG…GYVL), and 178-198 (FFAF…LHLL). 2 residues coordinate heme b: His83 and His97. Residues His182 and His196 each contribute to the heme b site. His201 is a binding site for a ubiquinone. The next 4 membrane-spanning stretches (helical) occupy residues 226-246 (YKDL…ALFT), 288-308 (LGGV…PILH), 320-340 (VTQF…WIGG), and 347-367 (YIII…LIMP).

It belongs to the cytochrome b family. As to quaternary structure, the cytochrome bc1 complex contains 3 respiratory subunits (MT-CYB, CYC1 and UQCRFS1), 2 core proteins (UQCRC1 and UQCRC2) and probably 6 low-molecular weight proteins. Heme b serves as cofactor.

It localises to the mitochondrion inner membrane. In terms of biological role, component of the ubiquinol-cytochrome c reductase complex (complex III or cytochrome b-c1 complex) that is part of the mitochondrial respiratory chain. The b-c1 complex mediates electron transfer from ubiquinol to cytochrome c. Contributes to the generation of a proton gradient across the mitochondrial membrane that is then used for ATP synthesis. In Pagrus major (Red sea bream), this protein is Cytochrome b (mt-cyb).